Consider the following 112-residue polypeptide: Large ribosomal subunit protein P1 (112 aa).

Positions 80 to 112 (AAAAPAAESKKEEKKKEEESDQSDDDMGFGLFD) are disordered. Over residues 87–97 (ESKKEEKKKEE) the composition is skewed to basic and acidic residues. Residues Ser-99 and Ser-102 each carry the phosphoserine modification.

It belongs to the eukaryotic ribosomal protein P1/P2 family. As to quaternary structure, P1 and P2 exist as dimers at the large ribosomal subunit.

Plays an important role in the elongation step of protein synthesis. The polypeptide is Large ribosomal subunit protein P1 (RpLP1) (Drosophila melanogaster (Fruit fly)).